A 360-amino-acid polypeptide reads, in one-letter code: Photosystem II protein D1 (360 aa).

3 helical membrane-spanning segments follow: residues 29–46 (YIGW…TATT), 118–133 (HFLL…QWEL), and 142–156 (WICV…AATA). His118 contributes to the chlorophyll a binding site. Tyr126 is a pheophytin a binding site. [CaMn4O5] cluster is bound by residues Asp170 and Glu189. A helical transmembrane segment spans residues 197–218 (FHMLGVAGVFGGSLFSAMHGSL). Position 198 (His198) interacts with chlorophyll a. Residues His215 and 264 to 265 (SF) contribute to the a quinone site. His215 lines the Fe cation pocket. His272 contributes to the Fe cation binding site. A helical transmembrane segment spans residues 274 to 288 (FLGAWPVIGIWFTAM). 4 residues coordinate [CaMn4O5] cluster: His332, Glu333, Asp342, and Ala344. Positions 345–360 (SGEQAPVALIAPAING) are excised as a propeptide.

Belongs to the reaction center PufL/M/PsbA/D family. In terms of assembly, PSII is composed of 1 copy each of membrane proteins PsbA, PsbB, PsbC, PsbD, PsbE, PsbF, PsbH, PsbI, PsbJ, PsbK, PsbL, PsbM, PsbT, PsbX, PsbY, PsbZ, Psb30/Ycf12, peripheral proteins PsbO, CyanoQ (PsbQ), PsbU, PsbV and a large number of cofactors. It forms dimeric complexes. The D1/D2 heterodimer binds P680, chlorophylls that are the primary electron donor of PSII, and subsequent electron acceptors. It shares a non-heme iron and each subunit binds pheophytin, quinone, additional chlorophylls, carotenoids and lipids. D1 provides most of the ligands for the Mn4-Ca-O5 cluster of the oxygen-evolving complex (OEC). There is also a Cl(-1) ion associated with D1 and D2, which is required for oxygen evolution. The PSII complex binds additional chlorophylls, carotenoids and specific lipids. serves as cofactor. In terms of processing, tyr-161 forms a radical intermediate that is referred to as redox-active TyrZ, YZ or Y-Z. C-terminally processed by CtpA; processing is essential to allow assembly of the oxygen-evolving complex and thus photosynthetic growth.

The protein localises to the cellular thylakoid membrane. The enzyme catalyses 2 a plastoquinone + 4 hnu + 2 H2O = 2 a plastoquinol + O2. Photosystem II (PSII) is a light-driven water:plastoquinone oxidoreductase that uses light energy to abstract electrons from H(2)O, generating O(2) and a proton gradient subsequently used for ATP formation. It consists of a core antenna complex that captures photons, and an electron transfer chain that converts photonic excitation into a charge separation. The D1/D2 (PsbA/PsbD) reaction center heterodimer binds P680, the primary electron donor of PSII as well as several subsequent electron acceptors. The chain is Photosystem II protein D1 from Microcystis aeruginosa (strain NIES-843 / IAM M-2473).